Reading from the N-terminus, the 375-residue chain is GDP-mannose transporter GONST2 (375 aa).

9 helical membrane passes run 79–99, 112–132, 141–161, 165–185, 199–219, 262–282, 300–320, 327–347, and 349–369; these read LVSG…NKIV, MLYQ…SGVV, LIRV…SGMY, YINV…TGIG, WAAM…DLTF, MVLL…ILLG, VVAT…MWFL, TYSL…LVLF, and VPLS…GVVF.

This sequence belongs to the nucleotide-sugar transporter family. GDP-Mannose:GMP antiporter (GMA) (TC 2.A.7.13) subfamily. Expressed in rosette leaves, stems, flowers and siliques.

It localises to the golgi apparatus membrane. GDP-mannose transporter that may be involved in the import of GDP-mannose from the cytoplasm into the Golgi lumen. The protein is GDP-mannose transporter GONST2 of Arabidopsis thaliana (Mouse-ear cress).